The primary structure comprises 360 residues: 45 kDa calcium-binding protein (360 aa).

The first 29 residues, 1–29, serve as a signal peptide directing secretion; sequence MVSKQAFLFSLGSLYLSLLFVFLLMDVYA. An N-linked (GlcNAc...) asparagine glycan is attached at Asn-33. 5 consecutive EF-hand domains span residues 96-131, 135-170, 231-266, 276-311, and 312-347; these read RNRR…KTEE, EAVN…SKGF, MLKF…TVEN, WVRD…MNEY, and NALN…FTGS. The Ca(2+) site is built by Asp-109, Asn-111, Asp-113, Gln-115, Glu-120, Asp-148, Asp-150, Asp-152, His-154, Glu-159, Asp-244, Asp-246, Asp-248, Lys-250, Glu-255, Asp-289, Asn-291, Asp-293, Glu-300, Asp-325, Asn-327, Asp-329, His-331, and Glu-336.

The protein belongs to the CREC family.

It localises to the golgi apparatus lumen. In terms of biological role, may regulate calcium-dependent activities in the endoplasmic reticulum lumen or post-ER compartment. In Xenopus tropicalis (Western clawed frog), this protein is 45 kDa calcium-binding protein (sdf4).